Consider the following 657-residue polypeptide: Protein translocase subunit SecA 2 (657 aa).

ATP is bound by residues Q93, 111 to 115 (GEGKT), and D531.

Belongs to the SecA family. In terms of assembly, monomer and homodimer. Part of the essential Sec protein translocation apparatus which comprises SecA, SecYEG and auxiliary proteins SecDF. Other proteins may also be involved.

It is found in the cell inner membrane. The protein resides in the cytoplasm. The catalysed reaction is ATP + H2O + cellular proteinSide 1 = ADP + phosphate + cellular proteinSide 2.. Its function is as follows. Part of the Sec protein translocase complex. Interacts with the SecYEG preprotein conducting channel. Has a central role in coupling the hydrolysis of ATP to the transfer of proteins into and across the cell membrane, serving as an ATP-driven molecular motor driving the stepwise translocation of polypeptide chains across the membrane. The sequence is that of Protein translocase subunit SecA 2 from Rhodopirellula baltica (strain DSM 10527 / NCIMB 13988 / SH1).